Consider the following 326-residue polypeptide: Beta-ketoacyl-[acyl-carrier-protein] synthase III (326 aa).

Catalysis depends on residues Cys120 and His253. The segment at 254-258 (QANIR) is ACP-binding. Asn283 is a catalytic residue.

Belongs to the thiolase-like superfamily. FabH family. Homodimer.

Its subcellular location is the cytoplasm. The enzyme catalyses malonyl-[ACP] + acetyl-CoA + H(+) = 3-oxobutanoyl-[ACP] + CO2 + CoA. It participates in lipid metabolism; fatty acid biosynthesis. Functionally, catalyzes the condensation reaction of fatty acid synthesis by the addition to an acyl acceptor of two carbons from malonyl-ACP. Catalyzes the first condensation reaction which initiates fatty acid synthesis and may therefore play a role in governing the total rate of fatty acid production. Possesses both acetoacetyl-ACP synthase and acetyl transacylase activities. Its substrate specificity determines the biosynthesis of branched-chain and/or straight-chain of fatty acids. The polypeptide is Beta-ketoacyl-[acyl-carrier-protein] synthase III (Cupriavidus taiwanensis (strain DSM 17343 / BCRC 17206 / CCUG 44338 / CIP 107171 / LMG 19424 / R1) (Ralstonia taiwanensis (strain LMG 19424))).